Reading from the N-terminus, the 226-residue chain is Deoxyribose-phosphate aldolase (226 aa).

Asp-94 functions as the Proton donor/acceptor in the catalytic mechanism. Lys-156 acts as the Schiff-base intermediate with acetaldehyde in catalysis. The active-site Proton donor/acceptor is the Lys-185.

The protein belongs to the DeoC/FbaB aldolase family. DeoC type 1 subfamily.

Its subcellular location is the cytoplasm. The enzyme catalyses 2-deoxy-D-ribose 5-phosphate = D-glyceraldehyde 3-phosphate + acetaldehyde. It functions in the pathway carbohydrate degradation; 2-deoxy-D-ribose 1-phosphate degradation; D-glyceraldehyde 3-phosphate and acetaldehyde from 2-deoxy-alpha-D-ribose 1-phosphate: step 2/2. Functionally, catalyzes a reversible aldol reaction between acetaldehyde and D-glyceraldehyde 3-phosphate to generate 2-deoxy-D-ribose 5-phosphate. This is Deoxyribose-phosphate aldolase from Burkholderia lata (strain ATCC 17760 / DSM 23089 / LMG 22485 / NCIMB 9086 / R18194 / 383).